A 130-amino-acid chain; its full sequence is Iron-sulfur cluster assembly 1 homolog, mitochondrial (130 aa).

The transit peptide at 1 to 24 directs the protein to the mitochondrion; sequence MATRVVATATVRAVKGRKLIPTRA. Fe cation contacts are provided by C58, C122, and C124.

The protein belongs to the HesB/IscA family. In terms of assembly, interacts with cry. As to expression, detected in head.

It localises to the mitochondrion. In terms of biological role, involved in the assembly of mitochondrial iron-sulfur proteins. Probably involved in the binding of an intermediate of Fe/S cluster assembly. Required for maintenance of circadian rhythms under constant darkness. The sequence is that of Iron-sulfur cluster assembly 1 homolog, mitochondrial from Drosophila melanogaster (Fruit fly).